Reading from the N-terminus, the 85-residue chain is Exodeoxyribonuclease 7 small subunit (85 aa).

Belongs to the XseB family. As to quaternary structure, heterooligomer composed of large and small subunits.

It localises to the cytoplasm. The catalysed reaction is Exonucleolytic cleavage in either 5'- to 3'- or 3'- to 5'-direction to yield nucleoside 5'-phosphates.. Bidirectionally degrades single-stranded DNA into large acid-insoluble oligonucleotides, which are then degraded further into small acid-soluble oligonucleotides. This chain is Exodeoxyribonuclease 7 small subunit, found in Alkalilimnicola ehrlichii (strain ATCC BAA-1101 / DSM 17681 / MLHE-1).